The sequence spans 432 residues: Trigger factor (432 aa).

One can recognise a PPIase FKBP-type domain in the interval 161–246; it reads EDRVTIDFTG…LKKVEERELP (86 aa).

The protein belongs to the FKBP-type PPIase family. Tig subfamily. Homodimer and monomer. In vivo most of the ribosomes are in complex with monomeric TF. Uncomplexed TF, however, is in a monomer-dimer equilibrium with approximately two thirds of TF existing in a dimeric state.

It is found in the cytoplasm. The enzyme catalyses [protein]-peptidylproline (omega=180) = [protein]-peptidylproline (omega=0). In terms of biological role, involved in protein export. Acts as a chaperone by maintaining the newly synthesized protein in an open conformation. Functions as a peptidyl-prolyl cis-trans isomerase. This chain is Trigger factor, found in Escherichia coli O127:H6 (strain E2348/69 / EPEC).